A 510-amino-acid chain; its full sequence is ATP synthase subunit alpha (510 aa).

169–176 (GDRQTGKT) serves as a coordination point for ATP.

It belongs to the ATPase alpha/beta chains family. As to quaternary structure, F-type ATPases have 2 components, CF(1) - the catalytic core - and CF(0) - the membrane proton channel. CF(1) has five subunits: alpha(3), beta(3), gamma(1), delta(1), epsilon(1). CF(0) has three main subunits: a(1), b(2) and c(9-12). The alpha and beta chains form an alternating ring which encloses part of the gamma chain. CF(1) is attached to CF(0) by a central stalk formed by the gamma and epsilon chains, while a peripheral stalk is formed by the delta and b chains.

It is found in the cell inner membrane. The enzyme catalyses ATP + H2O + 4 H(+)(in) = ADP + phosphate + 5 H(+)(out). Functionally, produces ATP from ADP in the presence of a proton gradient across the membrane. The alpha chain is a regulatory subunit. This is ATP synthase subunit alpha from Rickettsia conorii (strain ATCC VR-613 / Malish 7).